The chain runs to 325 residues: BTB/POZ domain-containing protein KCTD12 (325 aa).

The interval Met-1–Glu-28 is disordered. Ala-2 is modified (N-acetylalanine). Residues Pro-11–Gly-21 are compositionally biased toward gly residues. Phosphotyrosine is present on Tyr-119. The disordered stretch occupies residues Leu-129–Asp-202. A phosphoserine mark is found at Ser-151, Ser-171, and Ser-185. Thr-196 carries the phosphothreonine modification. Ser-200 carries the phosphoserine modification.

Interacts as a tetramer with GABBR1 and GABBR2. Present in a variety of fetal organs, with highest expression levels in the cochlea and brain and, in stark contrast, is detected only at extremely low levels in adult organs, such as brain and lung.

It localises to the presynaptic cell membrane. The protein localises to the postsynaptic cell membrane. Its function is as follows. Auxiliary subunit of GABA-B receptors that determine the pharmacology and kinetics of the receptor response. Increases agonist potency and markedly alter the G-protein signaling of the receptors by accelerating onset and promoting desensitization. The polypeptide is BTB/POZ domain-containing protein KCTD12 (KCTD12) (Homo sapiens (Human)).